The chain runs to 1186 residues: MKKFNFRKVLDGLTASSPGSGSSSGSNSGGGAGSGSVHPAGTAGVLREEIQETLTSEYFQICKTVRHGFPHQPTALAFDPVQKILAIGTRTGAIRILGRPGVDCYCQHESGAAVLQLQFLINEGALVSASSDDTLHLWNLRQKRPAILHSLKFNRERITYCHLPFQSKWLYVGTERGNTHIVNIESFILSGYVIMWNKAIELSTKTHPGPVVHLSDSPRDEGKLLIGYENGTVVFWDLKSKRAELRVYYDEAIHSIDWHHEGKQFMCSHSDGSLTLWNLKSPSRPFQTTIPHGKSQREGRKSESCKPILKVEYKTCKNSEPFIIFSGGLSYDKACRRPSLTIMHGKAITVLEMDHPIVEFLTLCETPYPNEFQEPYAVVVLLEKDLIVVDLTQSNFPIFENPYPMDIHESPVTCTAYFADCPPDLILVLYSIGVKHKKQGYSNKEWPISGGAWNLGAQTYPEIIITGHADGSIKFWDASAITLQMLYKLKTSKVFEKQKVGEGKQTCEIVEEDPFAIQMIYWCPESRIFCVSGVSAYVIIYKFSRHEITTEIVSLEVRLQYDVEDIITPEPETSPPFPDLSAQLPSSRSLSGSTNTVASEGVTKDSIPCLNVKTRPVRMPPGYQAELVIQLVWVDGEPPQQITSLAVSSAYGIVAFGNCNGLAVVDFIQKTVLLSMGTIDLYRSSDLYQRQPRSPRKNKQFIADNFCMRGLSNFYPDLTKRIRTSYQSLTELNDSPVPLELERCKSPTSDHVNGHCTSPTSQSCSSGKRLSSADVSKVNRWGPGRPPFRKAQSAACMEISLPVTTEENRENSYNRSRSSSISSIDKDSKEAITALYFMDSFARKNDSTISPCLFVGTSLGMVLIISLNLPLADEQRFTEPVMVLPSGTFLSLKGAVLTFSCMDRMGGLMQPPYEVWRDPNNIDENEKSWRRKVVMNSSSASQEIGDHQYTIICSEKQAKVFSLPSQTCLYVHNITETSFILQANVVVMCSSACLACFCANGHIMIMSLPSLRPMLDVNYLPLTDMRIARTFCFTNEGQALYLVSPTEIQRLTYSQEMCDNLQDMLGDLFTPIETPEAQNRGFLKGLFGGSGQTFDREELFGEASAGKASRSLAQHIPGPGSIEGMKGAAGGVMGELTRARIALDERGQRLGELEEKTAGMMTSAEAFSKHAHELMLKYKDKKWYQF.

At Met1 the chain carries N-acetylmethionine. The segment at 15–40 (ASSPGSGSSSGSNSGGGAGSGSVHPA) is disordered. Low complexity predominate over residues 16–26 (SSPGSGSSSGS). WD repeat units lie at residues 74–107 (TALAFDPVQKILAIGTRTGAIRILGRPGVDCYCQ), 114–153 (VLQLQFLINEGALVSASSDDTLHLWNLRQKRPAILHSLKF), 158–194 (ITYCHLPFQSKWLYVGTERGNTHIVNIESFILSGYVI), 213–247 (HLSDSPRDEGKLLIGYENGTVVFWDLKSKRAELRV), 253–285 (IHSIDWHHEGKQFMCSHSDGSLTLWNLKSPSRP), 307–349 (PILK…KAIT), 357–391 (IVEFLTLCETPYPNEFQEPYAVVVLLEKDLIVVDL), 413–490 (TCTA…YKLK), 518–629 (QMIY…ELVI), and 643–705 (TSLA…IADN). Thr568 is subject to Phosphothreonine. Phosphoserine is present on residues Ser574, Ser589, and Ser593. The residue at position 596 (Thr596) is a Phosphothreonine. Ser599 bears the Phosphoserine mark. Position 709 is an omega-N-methylarginine (Arg709). Polar residues predominate over residues 748-769 (TSDHVNGHCTSPTSQSCSSGKR). Positions 748 to 771 (TSDHVNGHCTSPTSQSCSSGKRLS) are disordered. 11 positions are modified to phosphoserine: Ser763, Ser765, Ser766, Ser771, Ser772, Ser793, Ser800, Ser812, Ser820, Ser822, and Ser823. 4 WD repeats span residues 832 to 889 (ITAL…SGTF), 898 to 969 (TFSC…QTCL), 974 to 1018 (ITET…LDVN), and 1032 to 1055 (CFTNEGQALYLVSPTEIQRLTYSQ). Residue Thr1093 is modified to Phosphothreonine. A v-SNARE coiled-coil homology domain is found at 1121–1181 (SIEGMKGAAG…HELMLKYKDK (61 aa)).

The protein belongs to the WD repeat L(2)GL family. In terms of assembly, interacts with STX1A and STX4. Post-translationally, phosphorylated, leading to STXBP5L increased turnover and subsequent de-repression of insulin secretion. Phosphorylated on serine residues in response to glucose or phorbol esters. Ubiquitinated by the E3 ligase SYVN1, leading to STXBP5L proteasomal degradation. As to expression, detected in kidney, hippocampus and lung carcinoma.

The protein localises to the cytoplasm. The protein resides in the cell membrane. Its subcellular location is the membrane. In terms of biological role, plays a role in vesicle trafficking and exocytosis inhibition. In pancreatic beta-cells, inhibits insulin secretion probably by interacting with and regulating STX1A and STX4, key t-SNARE proteins involved in the fusion of insulin granules to the plasma membrane. Also plays a role in neurotransmitter release by inhibiting basal acetylcholine release from axon terminals and by preventing synaptic fatigue upon repetitive stimulation. Promotes as well axonal outgrowth. The polypeptide is Syntaxin-binding protein 5-like (STXBP5L) (Homo sapiens (Human)).